The sequence spans 825 residues: Fibrous sheath CABYR-binding protein (825 aa).

2 disordered regions span residues 1–43 and 113–139; these read MVGK…SYSA and QDVEIPPNIPSVQLKMDRSQQTSRTGY. Positions 21–40 are enriched in polar residues; the sequence is KSSSPKATHRIGNTSGSKGS. Residue Ser-160 is modified to Phosphoserine. 3 disordered regions span residues 168–232, 244–718, and 732–751; these read SRPD…LLED, QEGS…DKHS, and GEASAEVSPPPSEQTPEDEA. Residues 200-220 show a composition bias toward polar residues; sequence PATNSNEEIGQKNISRTSFTQ. Positions 277 to 290 are enriched in basic and acidic residues; that stretch reads ATAKAEPRPAEETH. 2 stretches are compositionally biased toward low complexity: residues 348 to 357 and 398 to 407; these read AEILPPSAEE and PLPAEGALEE. Over residues 610–676 the composition is skewed to pro residues; that stretch reads VQPPPAEEAP…PAEVQPPPAE (67 aa).

In terms of assembly, interacts with CABYR. Interacts with ROPN1 and ROPN1L; the interaction increases upon spermatozoa capacitation conditions. In terms of processing, phosphorylated by PKA upon spermatozoa capacitation conditions.

It is found in the cell projection. It localises to the cilium. Its subcellular location is the flagellum. Its function is as follows. May be involved in the later stages of fibrous sheath biogenesis and spermatozoa capacitation. Inhibits ROPN1 and ROPN1L SUMOylation. Binds calcium. In Homo sapiens (Human), this protein is Fibrous sheath CABYR-binding protein (FSCB).